Here is a 403-residue protein sequence, read N- to C-terminus: MTTEPLTPPTSGALLHTEIMSLNVGPQHPSTHGVLRLVVDMDGEYVTRVTPHMGYLHTGFEKTFEHRTYHQGVTYAPRTDYLHCFGHELAYVLSVEKLLGAEVPERATTVRVMLHELGRIHSHLVFVGTGLLDLGALTPFFYAFREKEAVQDLFEAVCGYRMNQGYFRVGGLARDIPEDWPARVAAFLDTFERGVDEYETLFAKNPIFLDRAKGVGVIPRDVAIDLGLTGPNLRASGVPLDHRKANPYCGYETYDFEVPVSQAGDSLARFQLRLLELRESAKIIRQALKRLTPGPIKDPNRKISLPPRSELETSMEAVIHHFKLVTEGFHPPKGEVYVPTESARGEVGYYIVSDGGSMPYRVKIRAPSFVNLQALEYACVGGQFADLITILASIDPVLGDVDR.

Belongs to the complex I 49 kDa subunit family. In terms of assembly, NDH-1 is composed of 15 different subunits. Subunits NuoB, C, D, E, F, and G constitute the peripheral sector of the complex.

The protein resides in the cell membrane. It catalyses the reaction a quinone + NADH + 5 H(+)(in) = a quinol + NAD(+) + 4 H(+)(out). NDH-1 shuttles electrons from NADH, via FMN and iron-sulfur (Fe-S) centers, to quinones in the respiratory chain. The immediate electron acceptor for the enzyme in this species is believed to be a menaquinone. Couples the redox reaction to proton translocation (for every two electrons transferred, four hydrogen ions are translocated across the cytoplasmic membrane), and thus conserves the redox energy in a proton gradient. The sequence is that of NADH-quinone oxidoreductase subunit D from Deinococcus geothermalis (strain DSM 11300 / CIP 105573 / AG-3a).